A 569-amino-acid polypeptide reads, in one-letter code: Proline--tRNA ligase (569 aa).

Belongs to the class-II aminoacyl-tRNA synthetase family. ProS type 1 subfamily. Homodimer.

It is found in the cytoplasm. The enzyme catalyses tRNA(Pro) + L-proline + ATP = L-prolyl-tRNA(Pro) + AMP + diphosphate. Functionally, catalyzes the attachment of proline to tRNA(Pro) in a two-step reaction: proline is first activated by ATP to form Pro-AMP and then transferred to the acceptor end of tRNA(Pro). As ProRS can inadvertently accommodate and process non-cognate amino acids such as alanine and cysteine, to avoid such errors it has two additional distinct editing activities against alanine. One activity is designated as 'pretransfer' editing and involves the tRNA(Pro)-independent hydrolysis of activated Ala-AMP. The other activity is designated 'posttransfer' editing and involves deacylation of mischarged Ala-tRNA(Pro). The misacylated Cys-tRNA(Pro) is not edited by ProRS. This chain is Proline--tRNA ligase, found in Legionella pneumophila subsp. pneumophila (strain Philadelphia 1 / ATCC 33152 / DSM 7513).